Here is a 440-residue protein sequence, read N- to C-terminus: 23S rRNA (uracil(1939)-C(5))-methyltransferase RlmD (440 aa).

A TRAM domain is found at 11 to 69 (STLDTKHQPVTIERLDHQGSGLAFLHKKPLFVDGALPGEEVLIQLTENKSKYARGQLIK). [4Fe-4S] cluster-binding residues include Cys-82, Cys-88, Cys-91, and Cys-169. S-adenosyl-L-methionine is bound by residues Gln-272, Phe-301, Asn-306, Glu-322, Asn-349, and Asp-370. Cys-396 functions as the Nucleophile in the catalytic mechanism.

The protein belongs to the class I-like SAM-binding methyltransferase superfamily. RNA M5U methyltransferase family. RlmD subfamily.

The catalysed reaction is uridine(1939) in 23S rRNA + S-adenosyl-L-methionine = 5-methyluridine(1939) in 23S rRNA + S-adenosyl-L-homocysteine + H(+). Functionally, catalyzes the formation of 5-methyl-uridine at position 1939 (m5U1939) in 23S rRNA. This is 23S rRNA (uracil(1939)-C(5))-methyltransferase RlmD from Vibrio cholerae serotype O1 (strain M66-2).